The chain runs to 166 residues: Protein-export protein SecB (166 aa).

Belongs to the SecB family. In terms of assembly, homotetramer, a dimer of dimers. One homotetramer interacts with 1 SecA dimer.

The protein resides in the cytoplasm. Its function is as follows. One of the proteins required for the normal export of preproteins out of the cell cytoplasm. It is a molecular chaperone that binds to a subset of precursor proteins, maintaining them in a translocation-competent state. It also specifically binds to its receptor SecA. This chain is Protein-export protein SecB, found in Actinobacillus pleuropneumoniae serotype 5b (strain L20).